Here is a 143-residue protein sequence, read N- to C-terminus: Nucleoside diphosphate kinase (143 aa).

Residues Lys-11, Phe-59, Arg-87, Thr-93, Arg-104, and Asn-114 each coordinate ATP. His-117 functions as the Pros-phosphohistidine intermediate in the catalytic mechanism.

This sequence belongs to the NDK family. In terms of assembly, homotetramer. Mg(2+) is required as a cofactor.

The protein resides in the cytoplasm. It carries out the reaction a 2'-deoxyribonucleoside 5'-diphosphate + ATP = a 2'-deoxyribonucleoside 5'-triphosphate + ADP. It catalyses the reaction a ribonucleoside 5'-diphosphate + ATP = a ribonucleoside 5'-triphosphate + ADP. Functionally, major role in the synthesis of nucleoside triphosphates other than ATP. The ATP gamma phosphate is transferred to the NDP beta phosphate via a ping-pong mechanism, using a phosphorylated active-site intermediate. The chain is Nucleoside diphosphate kinase from Salmonella agona (strain SL483).